The primary structure comprises 99 residues: Ribonuclease P protein component 1 (99 aa).

It belongs to the eukaryotic/archaeal RNase P protein component 1 family. In terms of assembly, consists of a catalytic RNA component and at least 4-5 protein subunits.

It localises to the cytoplasm. The enzyme catalyses Endonucleolytic cleavage of RNA, removing 5'-extranucleotides from tRNA precursor.. Its function is as follows. Part of ribonuclease P, a protein complex that generates mature tRNA molecules by cleaving their 5'-ends. This is Ribonuclease P protein component 1 from Methanococcus vannielii.